Reading from the N-terminus, the 212-residue chain is Glycerol-3-phosphate acyltransferase (212 aa).

6 helical membrane-spanning segments follow: residues 6 to 26, 56 to 76, 92 to 112, 122 to 142, 150 to 170, and 171 to 191; these read IAVL…GLIL, LAAL…LLAH, LTLI…WLGF, LGVS…AWLL, SSVG…FMPA, and SHEI…LLLW.

The protein belongs to the PlsY family. In terms of assembly, probably interacts with PlsX.

Its subcellular location is the cell inner membrane. It catalyses the reaction an acyl phosphate + sn-glycerol 3-phosphate = a 1-acyl-sn-glycero-3-phosphate + phosphate. It functions in the pathway lipid metabolism; phospholipid metabolism. Functionally, catalyzes the transfer of an acyl group from acyl-phosphate (acyl-PO(4)) to glycerol-3-phosphate (G3P) to form lysophosphatidic acid (LPA). This enzyme utilizes acyl-phosphate as fatty acyl donor, but not acyl-CoA or acyl-ACP. The protein is Glycerol-3-phosphate acyltransferase of Zymomonas mobilis subsp. mobilis (strain ATCC 31821 / ZM4 / CP4).